We begin with the raw amino-acid sequence, 290 residues long: Porphobilinogen deaminase (290 aa).

At C238 the chain carries S-(dipyrrolylmethanemethyl)cysteine.

This sequence belongs to the HMBS family. In terms of assembly, monomer. Requires dipyrromethane as cofactor.

The catalysed reaction is 4 porphobilinogen + H2O = hydroxymethylbilane + 4 NH4(+). It participates in porphyrin-containing compound metabolism; protoporphyrin-IX biosynthesis; coproporphyrinogen-III from 5-aminolevulinate: step 2/4. Functionally, tetrapolymerization of the monopyrrole PBG into the hydroxymethylbilane pre-uroporphyrinogen in several discrete steps. The polypeptide is Porphobilinogen deaminase (Caldicellulosiruptor saccharolyticus (strain ATCC 43494 / DSM 8903 / Tp8T 6331)).